A 293-amino-acid polypeptide reads, in one-letter code: 3-methyl-2-oxobutanoate hydroxymethyltransferase (293 aa).

Positions 1 to 26 (MTQAPVTAGTPYGTIPPASPLPQRRP) are disordered. The Mg(2+) site is built by Asp68 and Asp111. 3-methyl-2-oxobutanoate is bound by residues 68–69 (DS), Asp111, and Lys140. Glu142 serves as a coordination point for Mg(2+). Glu209 functions as the Proton acceptor in the catalytic mechanism.

Belongs to the PanB family. As to quaternary structure, homodecamer; pentamer of dimers. Mg(2+) is required as a cofactor.

It localises to the cytoplasm. It catalyses the reaction 3-methyl-2-oxobutanoate + (6R)-5,10-methylene-5,6,7,8-tetrahydrofolate + H2O = 2-dehydropantoate + (6S)-5,6,7,8-tetrahydrofolate. It functions in the pathway cofactor biosynthesis; (R)-pantothenate biosynthesis; (R)-pantoate from 3-methyl-2-oxobutanoate: step 1/2. Functionally, catalyzes the reversible reaction in which hydroxymethyl group from 5,10-methylenetetrahydrofolate is transferred onto alpha-ketoisovalerate to form ketopantoate. The polypeptide is 3-methyl-2-oxobutanoate hydroxymethyltransferase (Delftia acidovorans (strain DSM 14801 / SPH-1)).